The sequence spans 556 residues: 5-aminolevulinate synthase, mitochondrial (556 aa).

Residues 1–46 (MDSLARQSAKICPFVSRVTSSMQQVQVLHKTNMSAMAQQCPVMRRA) constitute a mitochondrion transit peptide. Substrate-binding residues include R105, S218, and K237. 3 residues coordinate pyridoxal 5'-phosphate: S270, H298, and T342. K345 is an active-site residue. At K345 the chain carries N6-(pyridoxal phosphate)lysine. 2 residues coordinate pyridoxal 5'-phosphate: T374 and S375. T460 is a binding site for substrate.

This sequence belongs to the class-II pyridoxal-phosphate-dependent aminotransferase family. As to quaternary structure, homodimer. Pyridoxal 5'-phosphate is required as a cofactor.

Its subcellular location is the mitochondrion matrix. The enzyme catalyses succinyl-CoA + glycine + H(+) = 5-aminolevulinate + CO2 + CoA. It functions in the pathway porphyrin-containing compound metabolism; protoporphyrin-IX biosynthesis; 5-aminolevulinate from glycine: step 1/1. Its function is as follows. Catalyzes the synthesis of 5-aminolevulinate (ALA) from succinyl-CoA and glycine, the first and rate-limiting step in heme biosynthesis. The protein is 5-aminolevulinate synthase, mitochondrial (HEM1) of Eremothecium gossypii (strain ATCC 10895 / CBS 109.51 / FGSC 9923 / NRRL Y-1056) (Yeast).